A 317-amino-acid polypeptide reads, in one-letter code: tRNA dimethylallyltransferase (317 aa).

14-21 (GPTAVGKT) lines the ATP pocket. Position 16 to 21 (16 to 21 (TAVGKT)) interacts with substrate. The interval 39–42 (DSMQ) is interaction with substrate tRNA.

The protein belongs to the IPP transferase family. In terms of assembly, monomer. Mg(2+) is required as a cofactor.

It catalyses the reaction adenosine(37) in tRNA + dimethylallyl diphosphate = N(6)-dimethylallyladenosine(37) in tRNA + diphosphate. In terms of biological role, catalyzes the transfer of a dimethylallyl group onto the adenine at position 37 in tRNAs that read codons beginning with uridine, leading to the formation of N6-(dimethylallyl)adenosine (i(6)A). The protein is tRNA dimethylallyltransferase of Bacillus cereus (strain AH187).